Here is a 372-residue protein sequence, read N- to C-terminus: 3-dehydroquinate synthase (372 aa).

NAD(+)-binding positions include 116–120, 140–141, lysine 153, lysine 162, and 180–183; these read GVVGD, TT, and TLKT. The Zn(2+) site is built by glutamate 195, histidine 260, and histidine 277.

This sequence belongs to the sugar phosphate cyclases superfamily. Dehydroquinate synthase family. Requires NAD(+) as cofactor. Co(2+) is required as a cofactor. Zn(2+) serves as cofactor.

It is found in the cytoplasm. The catalysed reaction is 7-phospho-2-dehydro-3-deoxy-D-arabino-heptonate = 3-dehydroquinate + phosphate. It functions in the pathway metabolic intermediate biosynthesis; chorismate biosynthesis; chorismate from D-erythrose 4-phosphate and phosphoenolpyruvate: step 2/7. Catalyzes the conversion of 3-deoxy-D-arabino-heptulosonate 7-phosphate (DAHP) to dehydroquinate (DHQ). In Prochlorococcus marinus (strain MIT 9313), this protein is 3-dehydroquinate synthase.